Here is a 1322-residue protein sequence, read N- to C-terminus: C-Jun-amino-terminal kinase-interacting protein 3 (1322 aa).

One can recognise an RH1 domain in the interval V12–L100. The segment at E50 to L80 is kinesin-binding domain (KBD); essential for its function in axon elongation. Residues L66–R167 are a coiled coil. Disordered regions lie at residues K183–V211 and S245–N317. The tract at residues N210–K226 is JNK-binding domain (JBD); essential for its function in axon elongation. Low complexity predominate over residues S261–T270. T266, T276, and T287 each carry phosphothreonine. The span at G271–P282 shows a compositional bias: polar residues. The span at N305–S315 shows a compositional bias: basic residues. Phosphoserine is present on residues S315, S365, and S366. Residues Q424 to A459 are leucine zipper-like domain (LZ); essential for its function in axon elongation. A coiled-coil region spans residues V443–A534. The interaction with NTRK2 stretch occupies residues A459–A515. Residues R506 to P580 enclose the RH2 domain. S588 and S662 each carry phosphoserine. Disordered stretches follow at residues W704–A754, P844–S952, and R1281–A1307. A compositionally biased stretch (basic and acidic residues) spans L724–P750. Over residues A914 to Q937 the composition is skewed to polar residues. Low complexity predominate over residues E941–S952. Over residues G1285 to T1294 the composition is skewed to acidic residues.

The protein belongs to the JIP scaffold family. As to quaternary structure, forms homo- or heterooligomeric complexes. The central region of MAPK8IP3 interacts with the C-terminal of MAPK8IP2 but not MAPK8IP1. Binds specific components of the JNK signaling pathway namely MAPK8/JNK1, MAPK9/JNK2 and MAPK10/JNK3 to the N-terminal region, MAP2K4/MKK4 and MAP2K7/MKK7 to the central region and MAP3K11 to the C-terminal region. Binds the TPR motif-containing C-terminal of kinesin light chain, KLC1. Pre-assembled MAPK8IP1 scaffolding complexes are then transported as a cargo of kinesin, to the required subcellular location. Interacts with ROCK1 and this interaction is enhanced by ultraviolet-B (UVB) radiation. Interacts with SH3RF2. Interacts with NTRK3/TRKC. Interacts with NTRK2/TRKB. Post-translationally, phosphorylation by ROCK1 is crucial for the recruitment of JNK.

The protein resides in the cytoplasm. Its subcellular location is the golgi apparatus. It is found in the cytoplasmic vesicle. The protein localises to the cell projection. It localises to the growth cone. The protein resides in the axon. Its subcellular location is the dendrite. It is found in the perinuclear region. Functionally, the JNK-interacting protein (JIP) group of scaffold proteins selectively mediates JNK signaling by aggregating specific components of the MAPK cascade to form a functional JNK signaling module. May function as a regulator of vesicle transport, through interactions with the JNK-signaling components and motor proteins. Promotes neuronal axon elongation in a kinesin- and JNK-dependent manner. Activates cofilin at axon tips via local activation of JNK, thereby regulating filopodial dynamics and enhancing axon elongation. Its binding to kinesin heavy chains (KHC), promotes kinesin-1 motility along microtubules and is essential for axon elongation and regeneration. Regulates cortical neuronal migration by mediating NTRK2/TRKB anterograde axonal transport during brain development. Acts as an adapter that bridges the interaction between NTRK2/TRKB and KLC1 and drives NTRK2/TRKB axonal but not dendritic anterograde transport, which is essential for subsequent BDNF-triggered signaling and filopodia formation. The sequence is that of C-Jun-amino-terminal kinase-interacting protein 3 (Mapk8ip3) from Rattus norvegicus (Rat).